A 635-amino-acid polypeptide reads, in one-letter code: Transaminated amino acid decarboxylase (635 aa).

Residue lysine 588 forms a Glycyl lysine isopeptide (Lys-Gly) (interchain with G-Cter in ubiquitin) linkage.

The protein belongs to the TPP enzyme family. It depends on Mg(2+) as a cofactor. Thiamine diphosphate is required as a cofactor.

It localises to the cytoplasm. It catalyses the reaction 4-methyl-2-oxopentanoate + H(+) = 3-methylbutanal + CO2. The catalysed reaction is (S)-3-methyl-2-oxopentanoate + H(+) = 2-methylbutanal + CO2. It carries out the reaction indole-3-pyruvate + H(+) = indole-3-acetaldehyde + CO2. The enzyme catalyses 3-phenylpyruvate + H(+) = 2-phenylacetaldehyde + CO2. It catalyses the reaction 4-methylsulfanyl-2-oxobutanoate + H(+) = 3-methylsulfanylpropanal + CO2. The catalysed reaction is 3-(4-hydroxyphenyl)pyruvate + H(+) = (4-hydroxyphenyl)acetaldehyde + CO2. The protein operates within amino-acid degradation; Ehrlich pathway. One of five 2-oxo acid decarboxylases (PDC1, PDC5, PDC6, ARO10, and THI3) involved in amino acid catabolism. The enzyme catalyzes the decarboxylation of amino acids, which, in a first step, have been transaminated to the corresponding 2-oxo acids (alpha-keto-acids). In a third step, the resulting aldehydes are reduced to alcohols, collectively referred to as fusel oils or alcohols. Its preferred substrates are the transaminated amino acids derived from phenylalanine (phenylpyruvate), tryptophan (3-(indol-3-yl)pyruvate), and probably tyrosine (4-hydroxyphenylpyruvate), but also isoleucine ((3S)-3-methyl-2-oxopentanoate, also alpha-keto-beta-methylvalerate) and methionine (4-methylthio-2-oxobutanoate), whereas transaminated leucine (4-methyl-2-oxopentanoate, also alpha-keto-isocaproate) is a low efficiency substrate and transaminated valine and pyruvate are no substrates. In analogy to the pyruvate decarboxylases the enzyme may in a side-reaction catalyze condensation (or carboligation) reactions leading to the formation of 2-hydroxy ketone, collectively called acyloins. This is Transaminated amino acid decarboxylase (ARO10) from Saccharomyces cerevisiae (strain ATCC 204508 / S288c) (Baker's yeast).